We begin with the raw amino-acid sequence, 446 residues long: N-succinylarginine dihydrolase (446 aa).

Substrate-binding positions include 19–28, N110, and 137–138; these read AGLSFGNVAS and HR. Residue E174 is part of the active site. Position 213 (R213) interacts with substrate. Residue H249 is part of the active site. Substrate is bound by residues D251 and N364. The Nucleophile role is filled by C370.

Belongs to the succinylarginine dihydrolase family. In terms of assembly, homodimer.

It carries out the reaction N(2)-succinyl-L-arginine + 2 H2O + 2 H(+) = N(2)-succinyl-L-ornithine + 2 NH4(+) + CO2. The protein operates within amino-acid degradation; L-arginine degradation via AST pathway; L-glutamate and succinate from L-arginine: step 2/5. Its function is as follows. Catalyzes the hydrolysis of N(2)-succinylarginine into N(2)-succinylornithine, ammonia and CO(2). The chain is N-succinylarginine dihydrolase from Burkholderia lata (strain ATCC 17760 / DSM 23089 / LMG 22485 / NCIMB 9086 / R18194 / 383).